The sequence spans 434 residues: MTTLQVASSLNDIAQQTRQAASLLAMLSTEAKNQAIAAVAQALESAKEEILQANIADCEAATAEGIAKPLYKRLQLDEHKLRDAIAGVRDVGKLADPIGQVQIQRELDTGLVLKRITCPLGVLGIIFEARPEAAIQIISLAIKSGNGVILKCGKEAVRSCEAIVKAVKQGLSTTDVNPDVVQLLTTREETLELLRLDKYVDLIIPRGSNSFVRFVQENTRIPVLGHADGICHVYIDKSADIEKAIAVSVDAKVQYPAACNAIETLLVHHSIAAEFLPKVAQALAERQVELKGDERTLQILPEIAAATAIDWETEYSDFILSIKIVDSLTEAIAHINQYGSRHTDAIITEDVAAVETFFGLVNSAGVFHNCSTRFADGFRYGFGAEVGISTQQMPPRGPVGLEGLVTYKYQMTGTGHIVATYTGENAKPFTHQDF.

This sequence belongs to the gamma-glutamyl phosphate reductase family.

The protein localises to the cytoplasm. The catalysed reaction is L-glutamate 5-semialdehyde + phosphate + NADP(+) = L-glutamyl 5-phosphate + NADPH + H(+). Its pathway is amino-acid biosynthesis; L-proline biosynthesis; L-glutamate 5-semialdehyde from L-glutamate: step 2/2. Functionally, catalyzes the NADPH-dependent reduction of L-glutamate 5-phosphate into L-glutamate 5-semialdehyde and phosphate. The product spontaneously undergoes cyclization to form 1-pyrroline-5-carboxylate. This Trichormus variabilis (strain ATCC 29413 / PCC 7937) (Anabaena variabilis) protein is Gamma-glutamyl phosphate reductase.